We begin with the raw amino-acid sequence, 199 residues long: MIASVRGEVLDIALDHAVIEASGVGYRVNATPVTLGALHRGSEARLFTTMIVREDSMTLYGFSDTESKDLFSLLQTVSGVGPRLAMATLAVLEPDALRRALSEGNLTALTRVPGIGKRGAERMVVELRDKVDAVATTAGAASGAVVGSSIRDQIVEALEGLGFPIKQAEQATDSVLAESPEATTSVALRSALSLLGKTR.

The tract at residues 1-63 (MIASVRGEVL…EDSMTLYGFS (63 aa)) is domain I. A domain II region spans residues 64–141 (DTESKDLFSL…DAVATTAGAA (78 aa)). The interval 141-145 (ASGAV) is flexible linker. The interval 146–199 (VGSSIRDQIVEALEGLGFPIKQAEQATDSVLAESPEATTSVALRSALSLLGKTR) is domain III.

Belongs to the RuvA family. In terms of assembly, homotetramer. Forms an RuvA(8)-RuvB(12)-Holliday junction (HJ) complex. HJ DNA is sandwiched between 2 RuvA tetramers; dsDNA enters through RuvA and exits via RuvB. An RuvB hexamer assembles on each DNA strand where it exits the tetramer. Each RuvB hexamer is contacted by two RuvA subunits (via domain III) on 2 adjacent RuvB subunits; this complex drives branch migration. In the full resolvosome a probable DNA-RuvA(4)-RuvB(12)-RuvC(2) complex forms which resolves the HJ.

The protein resides in the cytoplasm. Its function is as follows. The RuvA-RuvB-RuvC complex processes Holliday junction (HJ) DNA during genetic recombination and DNA repair, while the RuvA-RuvB complex plays an important role in the rescue of blocked DNA replication forks via replication fork reversal (RFR). RuvA specifically binds to HJ cruciform DNA, conferring on it an open structure. The RuvB hexamer acts as an ATP-dependent pump, pulling dsDNA into and through the RuvAB complex. HJ branch migration allows RuvC to scan DNA until it finds its consensus sequence, where it cleaves and resolves the cruciform DNA. This chain is Holliday junction branch migration complex subunit RuvA, found in Rhodococcus erythropolis (strain PR4 / NBRC 100887).